A 449-amino-acid chain; its full sequence is MTHSGQPAPLEARKCQSLIGRVRVPGDKSISHRALILGALAVGETRIAGLLEGEDVLNTAKAMQALGAKVERRIDDKSGIVWSVRGVGTSGFATPEAPLDFGNSGTGCRLVMGAVAGCPIVATFDGDGSLRSRPMRRILDPLELMGARVTGESDGGRLPLTLAGARDPLPIVYRTPVASAQIKSAVLLAGLSAPGITTVIESEASRDHTELMLKHFGAQIVSVSDGTHGRKISLTGQPELHGAAVTVPADPSSAAFPIVAALITEGSDIVLTDVMTNPLRTGLFATLREMGASIEESETRLDAGEPMAQLRVRASKLRGVEVPAARAPSMIDEYLVLAVAAAFAEGTTVMRGLHELRVKESDRLEAAAAMLRVNGVAVEIAGDDLIVEGRGRVPGGGLVTTHMDHRIAMSALAMGCASDAPVKVDDTAFIATSFPDFVPMMRRLGADFA.

Residues Lys28, Ser29, and Arg33 each coordinate 3-phosphoshikimate. Lys28 is a binding site for phosphoenolpyruvate. The phosphoenolpyruvate site is built by Gly105 and Arg133. 3-phosphoshikimate is bound by residues Ser179, Gln181, Asp332, and Lys359. Gln181 contributes to the phosphoenolpyruvate binding site. Asp332 (proton acceptor) is an active-site residue. Positions 363 and 406 each coordinate phosphoenolpyruvate.

The protein belongs to the EPSP synthase family. In terms of assembly, monomer.

The protein localises to the cytoplasm. The enzyme catalyses 3-phosphoshikimate + phosphoenolpyruvate = 5-O-(1-carboxyvinyl)-3-phosphoshikimate + phosphate. The protein operates within metabolic intermediate biosynthesis; chorismate biosynthesis; chorismate from D-erythrose 4-phosphate and phosphoenolpyruvate: step 6/7. Functionally, catalyzes the transfer of the enolpyruvyl moiety of phosphoenolpyruvate (PEP) to the 5-hydroxyl of shikimate-3-phosphate (S3P) to produce enolpyruvyl shikimate-3-phosphate and inorganic phosphate. This Nitrobacter hamburgensis (strain DSM 10229 / NCIMB 13809 / X14) protein is 3-phosphoshikimate 1-carboxyvinyltransferase.